Reading from the N-terminus, the 284-residue chain is Bifunctional protein FolD (284 aa).

NADP(+) is bound by residues 165–167, Ser-190, and Ile-231; that span reads GRS.

The protein belongs to the tetrahydrofolate dehydrogenase/cyclohydrolase family. As to quaternary structure, homodimer.

The enzyme catalyses (6R)-5,10-methylene-5,6,7,8-tetrahydrofolate + NADP(+) = (6R)-5,10-methenyltetrahydrofolate + NADPH. The catalysed reaction is (6R)-5,10-methenyltetrahydrofolate + H2O = (6R)-10-formyltetrahydrofolate + H(+). It participates in one-carbon metabolism; tetrahydrofolate interconversion. Functionally, catalyzes the oxidation of 5,10-methylenetetrahydrofolate to 5,10-methenyltetrahydrofolate and then the hydrolysis of 5,10-methenyltetrahydrofolate to 10-formyltetrahydrofolate. In Streptococcus thermophilus (strain ATCC BAA-491 / LMD-9), this protein is Bifunctional protein FolD.